The following is a 275-amino-acid chain: Hydroxyethylthiazole kinase (275 aa).

Residue methionine 53 participates in substrate binding. 2 residues coordinate ATP: arginine 128 and serine 174. Glycine 201 lines the substrate pocket.

This sequence belongs to the Thz kinase family. The cofactor is Mg(2+).

The enzyme catalyses 5-(2-hydroxyethyl)-4-methylthiazole + ATP = 4-methyl-5-(2-phosphooxyethyl)-thiazole + ADP + H(+). Its pathway is cofactor biosynthesis; thiamine diphosphate biosynthesis; 4-methyl-5-(2-phosphoethyl)-thiazole from 5-(2-hydroxyethyl)-4-methylthiazole: step 1/1. Functionally, catalyzes the phosphorylation of the hydroxyl group of 4-methyl-5-beta-hydroxyethylthiazole (THZ). In Kineococcus radiotolerans (strain ATCC BAA-149 / DSM 14245 / SRS30216), this protein is Hydroxyethylthiazole kinase.